We begin with the raw amino-acid sequence, 220 residues long: Fructose-6-phosphate aldolase (220 aa).

K85 (schiff-base intermediate with substrate) is an active-site residue.

It belongs to the transaldolase family. Type 3A subfamily. Homodecamer.

Its subcellular location is the cytoplasm. The enzyme catalyses beta-D-fructose 6-phosphate = dihydroxyacetone + D-glyceraldehyde 3-phosphate. Functionally, catalyzes the reversible formation of fructose 6-phosphate from dihydroxyacetone and D-glyceraldehyde 3-phosphate via an aldolization reaction. The sequence is that of Fructose-6-phosphate aldolase from Enterobacter sp. (strain 638).